Consider the following 91-residue polypeptide: Peptide Ctry2146 (91 aa).

The first 23 residues, Met1–Ala23, serve as a signal peptide directing secretion. The residue at position 33 (Leu33) is a Leucine amide. The propeptide occupies Gly37–Tyr91.

It belongs to the non-disulfide-bridged peptide (NDBP) superfamily. Short antimicrobial peptide (group 4) family. Expressed by the venom gland.

It is found in the secreted. The protein localises to the target cell membrane. In terms of biological role, antimicrobial peptide. This Chaerilus tryznai (Scorpion) protein is Peptide Ctry2146.